The primary structure comprises 20 residues: DnaJ homolog subfamily C member 1 (20 aa).

Over 1–20 (WESGDLELFDLVEEVXLNFY) the chain is Lumenal. Positions 18-20 (NFY) constitute a J domain.

In terms of assembly, interacts (via SANT 2 domain) with SERPINA3; the interaction delays the formation of the covalent inhibitory complex SERPINA3-chymotrypsin, but does not alter the catalytic activity of SERPINA3. Interacts (via SANT 2 domain) with ITIH4 (via C-terminus); the interaction protects ITIH4 against in vitro cleavage by kallikrein. Interacts (via J domain) with HSPA5. Interacts (via cytosolic domain) with ribosomes.

It localises to the endoplasmic reticulum membrane. The protein localises to the nucleus membrane. Its subcellular location is the microsome membrane. This Canis lupus familiaris (Dog) protein is DnaJ homolog subfamily C member 1 (DNAJC1).